A 312-amino-acid polypeptide reads, in one-letter code: Prephenate dehydratase (312 aa).

A Prephenate dehydratase domain is found at Gly-3 to Arg-194. The ACT domain maps to Ser-208–Pro-285. Residues Gly-291 to Pro-312 form a disordered region.

In terms of assembly, homodimer.

It catalyses the reaction prephenate + H(+) = 3-phenylpyruvate + CO2 + H2O. The protein operates within amino-acid biosynthesis; L-phenylalanine biosynthesis; phenylpyruvate from prephenate: step 1/1. The sequence is that of Prephenate dehydratase (pheA) from Mycolicibacterium vanbaalenii (strain DSM 7251 / JCM 13017 / BCRC 16820 / KCTC 9966 / NRRL B-24157 / PYR-1) (Mycobacterium vanbaalenii).